We begin with the raw amino-acid sequence, 291 residues long: Omega-amidase NIT3 (291 aa).

The region spanning 11–264 (IKVALVQLSG…EEIIYAELDP (254 aa)) is the CN hydrolase domain. Thr-34 is subject to Phosphothreonine. The Proton acceptor role is filled by Glu-53. The active-site Proton donor is Lys-128. The Nucleophile role is filled by Cys-169.

This sequence belongs to the carbon-nitrogen hydrolase superfamily. NIT1/NIT2 family. As to quaternary structure, homodimer.

The enzyme catalyses a monoamide of a dicarboxylate + H2O = a dicarboxylate + NH4(+). Functionally, possesses omega-amidase activity. The role of omega-amidase is to remove potentially toxic intermediates by converting 2-oxoglutaramate and 2-oxosuccinamate to biologically useful 2-oxoglutarate and oxaloacetate, respectively. In Saccharomyces cerevisiae (strain ATCC 204508 / S288c) (Baker's yeast), this protein is Omega-amidase NIT3 (NIT3).